Consider the following 201-residue polypeptide: Ribonuclease HII (201 aa).

Residues 12–201 (DLVAGVDEVG…VRELLDVPVQ (190 aa)) form the RNase H type-2 domain. The a divalent metal cation site is built by D18, E19, and D110.

Belongs to the RNase HII family. Mn(2+) serves as cofactor. It depends on Mg(2+) as a cofactor.

The protein resides in the cytoplasm. The enzyme catalyses Endonucleolytic cleavage to 5'-phosphomonoester.. Functionally, endonuclease that specifically degrades the RNA of RNA-DNA hybrids. The chain is Ribonuclease HII from Pseudomonas aeruginosa (strain UCBPP-PA14).